The sequence spans 396 residues: Elongation factor Tu (396 aa).

The region spanning 10–206 (KPHVNIGTIG…AVDEYIPTPQ (197 aa)) is the tr-type G domain. Residues 19-26 (GHVDHGKT) are G1. 19 to 26 (GHVDHGKT) contacts GTP. Position 26 (Thr26) interacts with Mg(2+). The tract at residues 60–64 (GITIS) is G2. Residues 81 to 84 (DCPG) form a G3 region. Residues 81 to 85 (DCPGH) and 136 to 139 (NKVD) contribute to the GTP site. The interval 136–139 (NKVD) is G4. The segment at 174–176 (SAL) is G5.

This sequence belongs to the TRAFAC class translation factor GTPase superfamily. Classic translation factor GTPase family. EF-Tu/EF-1A subfamily. Monomer.

Its subcellular location is the cytoplasm. The enzyme catalyses GTP + H2O = GDP + phosphate + H(+). In terms of biological role, GTP hydrolase that promotes the GTP-dependent binding of aminoacyl-tRNA to the A-site of ribosomes during protein biosynthesis. The protein is Elongation factor Tu of Stigmatella aurantiaca.